Reading from the N-terminus, the 193-residue chain is MLGNLDKYQIILASNSPRRKELMSGLGVDYVVRTLPDVDESYPADLAGAEIPEYISREKADAYRSIMQPGELLITADTIVWLDGKVLGKPEGREGAVEMLRSLSGKSHQVFTGVCLTTTEWQKSFTAASDVEFDVLSEEEIRYYVDKYQPMDKAGAYGVQEWIGYIGVKSISGSFYNIMGLPIQKLYGELKKL.

D77 functions as the Proton acceptor in the catalytic mechanism.

Belongs to the Maf family. YhdE subfamily. A divalent metal cation serves as cofactor.

Its subcellular location is the cytoplasm. It carries out the reaction dTTP + H2O = dTMP + diphosphate + H(+). The catalysed reaction is UTP + H2O = UMP + diphosphate + H(+). Nucleoside triphosphate pyrophosphatase that hydrolyzes dTTP and UTP. May have a dual role in cell division arrest and in preventing the incorporation of modified nucleotides into cellular nucleic acids. This chain is dTTP/UTP pyrophosphatase, found in Bacteroides thetaiotaomicron (strain ATCC 29148 / DSM 2079 / JCM 5827 / CCUG 10774 / NCTC 10582 / VPI-5482 / E50).